Reading from the N-terminus, the 276-residue chain is Large ribosomal subunit protein uL2 (276 aa).

A disordered region spans residues 224–265 (VMNPVDHPHGGGEGRTASGRHPVSPWGLPTKGYKTRNNKRTD).

It belongs to the universal ribosomal protein uL2 family. As to quaternary structure, part of the 50S ribosomal subunit. Forms a bridge to the 30S subunit in the 70S ribosome.

Functionally, one of the primary rRNA binding proteins. Required for association of the 30S and 50S subunits to form the 70S ribosome, for tRNA binding and peptide bond formation. It has been suggested to have peptidyltransferase activity; this is somewhat controversial. Makes several contacts with the 16S rRNA in the 70S ribosome. The sequence is that of Large ribosomal subunit protein uL2 from Dichelobacter nodosus (strain VCS1703A).